Here is an 88-residue protein sequence, read N- to C-terminus: Cell division topological specificity factor (88 aa).

It belongs to the MinE family.

Functionally, prevents the cell division inhibition by proteins MinC and MinD at internal division sites while permitting inhibition at polar sites. This ensures cell division at the proper site by restricting the formation of a division septum at the midpoint of the long axis of the cell. The chain is Cell division topological specificity factor from Carboxydothermus hydrogenoformans (strain ATCC BAA-161 / DSM 6008 / Z-2901).